Consider the following 396-residue polypeptide: MTSRSTEKSAAANPAAVSKTPSPDRIRRAPKVLLHDHLDGGLRPGTIVELARETGYGDLPETDADLLGTWFRQAADSGSLERYLETFSHTVGVMQTRDALVRVAAECAEDLAEDGVVYAEVRYAPEQHLEKGLTLEEVVEAVNEGFREGERRARDNGHRIRVGALLTAMRHAARSLEIAELANRYRDLGVVGFDIAGAEAGYPPTRHLDAFEYLKRENNHFTIHAGEAFGLPSIWQALQWCGADRLGHGVRIIDDIQVHEDGSVKLGRLASYVRDKRIPLELCPSSNLQTGAADSYAEHPIGLLRRLHFRATVNTDNRLMSHTSMSREFEHLVEAFGYTLDDMQWFSVNAMKSAFIPFDERLAMINDVIKPGYAELKSEWLFQQTASTSGSSESDG.

Residues 1 to 26 (MTSRSTEKSAAANPAAVSKTPSPDRI) are disordered. Histidine 35 and histidine 37 together coordinate Zn(2+). Positions 37, 39, and 197 each coordinate substrate. A Zn(2+)-binding site is contributed by histidine 224. Catalysis depends on glutamate 227, which acts as the Proton donor. Aspartate 316 lines the Zn(2+) pocket.

This sequence belongs to the metallo-dependent hydrolases superfamily. Adenosine and AMP deaminases family. Adenosine deaminase subfamily. As to quaternary structure, homotetramer. The cofactor is Zn(2+).

It carries out the reaction adenosine + H2O + H(+) = inosine + NH4(+). It catalyses the reaction 2'-deoxyadenosine + H2O + H(+) = 2'-deoxyinosine + NH4(+). Its activity is regulated as follows. Coformycin and 2'-deoxycoformycin, whose structures mimic the transition state of the deamination reaction, are potent competitive inhibitors. Catalyzes the hydrolytic deamination of adenosine and 2-deoxyadenosine. This chain is Adenosine deaminase 1, found in Streptomyces coelicolor (strain ATCC BAA-471 / A3(2) / M145).